The following is a 430-amino-acid chain: Enolase (430 aa).

Residue Q163 participates in (2R)-2-phosphoglycerate binding. The active-site Proton donor is E205. Mg(2+)-binding residues include D242, E287, and D314. K339, R368, S369, and K390 together coordinate (2R)-2-phosphoglycerate. Residue K339 is the Proton acceptor of the active site.

Belongs to the enolase family. Requires Mg(2+) as cofactor.

Its subcellular location is the cytoplasm. It is found in the secreted. The protein resides in the cell surface. The catalysed reaction is (2R)-2-phosphoglycerate = phosphoenolpyruvate + H2O. The protein operates within carbohydrate degradation; glycolysis; pyruvate from D-glyceraldehyde 3-phosphate: step 4/5. Catalyzes the reversible conversion of 2-phosphoglycerate (2-PG) into phosphoenolpyruvate (PEP). It is essential for the degradation of carbohydrates via glycolysis. The protein is Enolase of Exiguobacterium sibiricum (strain DSM 17290 / CCUG 55495 / CIP 109462 / JCM 13490 / 255-15).